The following is a 94-amino-acid chain: Endoribonuclease VapD 2 (94 aa).

It belongs to the VapD ribonuclease family. In terms of assembly, homodimer.

In terms of biological role, cleaves ssRNA, mostly between U:A. This chain is Endoribonuclease VapD 2, found in Riemerella anatipestifer (Moraxella anatipestifer).